We begin with the raw amino-acid sequence, 148 residues long: uncharacterized protein (148 aa).

The span at 1–11 shows a compositional bias: polar residues; it reads MKPRNINNSLP. A disordered region spans residues 1-31; that stretch reads MKPRNINNSLPLQPLVPDQENKNKKNEEKSV. Over residues 19–30 the composition is skewed to basic and acidic residues; that stretch reads QENKNKKNEEKS.

This is an uncharacterized protein from Escherichia coli (strain K12).